Reading from the N-terminus, the 338-residue chain is Anthranilate phosphoribosyltransferase (338 aa).

Residues Gly-81, 84-85 (GD), Ser-89, 91-94 (NVST), 109-117 (KHGNRALSS), and Ala-121 contribute to the 5-phospho-alpha-D-ribose 1-diphosphate site. Gly-81 serves as a coordination point for anthranilate. Ser-93 contributes to the Mg(2+) binding site. Asn-112 provides a ligand contact to anthranilate. Arg-167 is a binding site for anthranilate. Residues Asp-226 and Glu-227 each contribute to the Mg(2+) site.

It belongs to the anthranilate phosphoribosyltransferase family. In terms of assembly, homodimer. Mg(2+) is required as a cofactor.

It carries out the reaction N-(5-phospho-beta-D-ribosyl)anthranilate + diphosphate = 5-phospho-alpha-D-ribose 1-diphosphate + anthranilate. It participates in amino-acid biosynthesis; L-tryptophan biosynthesis; L-tryptophan from chorismate: step 2/5. Functionally, catalyzes the transfer of the phosphoribosyl group of 5-phosphorylribose-1-pyrophosphate (PRPP) to anthranilate to yield N-(5'-phosphoribosyl)-anthranilate (PRA). The polypeptide is Anthranilate phosphoribosyltransferase (Rhodopseudomonas palustris (strain HaA2)).